Consider the following 444-residue polypeptide: Methylenetetrahydrofolate--tRNA-(uracil-5-)-methyltransferase TrmFO (444 aa).

10–15 (GAGLAG) lines the FAD pocket.

Belongs to the MnmG family. TrmFO subfamily. FAD is required as a cofactor.

It localises to the cytoplasm. The catalysed reaction is uridine(54) in tRNA + (6R)-5,10-methylene-5,6,7,8-tetrahydrofolate + NADH + H(+) = 5-methyluridine(54) in tRNA + (6S)-5,6,7,8-tetrahydrofolate + NAD(+). The enzyme catalyses uridine(54) in tRNA + (6R)-5,10-methylene-5,6,7,8-tetrahydrofolate + NADPH + H(+) = 5-methyluridine(54) in tRNA + (6S)-5,6,7,8-tetrahydrofolate + NADP(+). Functionally, catalyzes the folate-dependent formation of 5-methyl-uridine at position 54 (M-5-U54) in all tRNAs. The sequence is that of Methylenetetrahydrofolate--tRNA-(uracil-5-)-methyltransferase TrmFO from Streptococcus equi subsp. equi (strain 4047).